A 224-amino-acid polypeptide reads, in one-letter code: Artemin (224 aa).

Residues 1-39 (MELGLAEPTALSHCLRPRWQSAWWPTLAVLALLSCVTEA) form the signal peptide. A propeptide spanning residues 40 to 111 (SLDPMSRSPA…AALRGARAAR (72 aa)) is cleaved from the precursor. Residues 43-124 (PMSRSPAARD…RSSRARTTDA (82 aa)) are disordered. Pro residues predominate over residues 80–95 (RPPPQSPQPAPPPPGP). Residues 96–116 (ALQSPPAALRGARAARAGTRS) are compositionally biased toward low complexity. Intrachain disulfides connect Cys-127-Cys-192, Cys-154-Cys-220, and Cys-158-Cys-222. The N-linked (GlcNAc...) asparagine glycan is linked to Asn-206.

It belongs to the TGF-beta family. GDNF subfamily. As to quaternary structure, homodimer; disulfide-linked. Interacts with GFRA3 coreceptor and RET: forms a 2:2:2 ternary complex composed of ARTN ligand, GFRA3 and RET receptor.

Its subcellular location is the secreted. Growth factor that supports the survival of sensory and sympathetic peripheral neurons in culture and also supports the survival of dopaminergic neurons of the ventral mid-brain. Acts by binding to its coreceptor, GFRA3, leading to autophosphorylation and activation of the RET receptor. Strong attractant of gut hematopoietic cells thus promoting the formation Peyer's patch-like structures, a major component of the gut-associated lymphoid tissue. The protein is Artemin of Mus musculus (Mouse).